The sequence spans 190 residues: Subtilisin inhibitor CLSI-II (190 aa).

2 disulfides stabilise this stretch: Cys44/Cys88 and Cys142/Cys149.

Belongs to the protease inhibitor I3 (leguminous Kunitz-type inhibitor) family. Forms active dimers on storage in aqueous solution, possibly through formation of an intermolecular disulfide bond. In terms of processing, the N-terminal Asn is removed in about 50% of both the CLSI-II and CLSI-III chains.

Its subcellular location is the secreted. Functionally, inhibits subtilisin-type microbial serine proteases incuding proteinase K, subtilisin BPN', subtilisin Carlsberg and subtilisin E in a non-stoichiometric manner. Weakly inhibits A.oryzae protease and some metalloproteases including pronase E. Does not inhibit trypsin, chymotrypsin, S.griseus alkaline protease or A.lyticus lysyl endopeptidase. CLSI-II has a wider inhibitory specificity than CLSI-III. The polypeptide is Subtilisin inhibitor CLSI-II (Canavalia lineata (Beach bean)).